Consider the following 413-residue polypeptide: Floricaula/leafy homolog 1 (413 aa).

Disordered stretches follow at residues E154 to T177 and Q191 to E239. Residues G201–A210 show a composition bias toward basic and acidic residues. The segment covering E211–N225 has biased composition (acidic residues). DNA-binding regions lie at residues R238–F242, N307–Y314, and Y378–T381.

It belongs to the FLO/LFY family. Expressed in floral meristems and in indeterminate vegetative meristems.

The protein resides in the nucleus. Probable transcription factor that act to specify determinacy in the progenitor cells for both flowers and leaves. This is Floricaula/leafy homolog 1 (FL1) from Nicotiana tabacum (Common tobacco).